The chain runs to 1499 residues: Collagen alpha-2(V) chain (1499 aa).

The signal sequence occupies residues 1–26 (MMANWAEARPLLILIVLLGQFVSIKA). Residues 39-97 (IACTQNGQMYLNRDIWKPAPCQICVCDNGAILCDKIECQDVLDCADPVTPPGECCPVCS) form the VWFC domain. The interval 104–1268 (NTNFGRGRKG…DDKNKTDPGV (1165 aa)) is disordered. The span at 170-182 (PGAPGPPGHPSHP) shows a compositional bias: pro residues. Positions 212-227 (PGSVGPVGPRGPQGLQ) are enriched in low complexity. Residues 236–248 (TGPPGEPGDPGPM) show a composition bias toward pro residues. Hydroxyproline occurs at positions 290, 293, and 296. 2 stretches are compositionally biased toward low complexity: residues 322–340 (EAGP…PRGM) and 427–443 (TPGA…SGPP). The Cell attachment site motif lies at 506–508 (RGD). Low complexity-rich tracts occupy residues 604-626 (SIGI…SGDP) and 694-709 (DQGV…PLGP). Hydroxyproline occurs at positions 611 and 617. Over residues 710–721 (RGERGNPGERGE) the composition is skewed to basic and acidic residues. A compositionally biased stretch (gly residues) spans 732–741 (GMAGGHGPDG). Over residues 742–758 (PKGSPGPSGTPGDTGPP) the composition is skewed to low complexity. Residues 776-787 (KGDRGGIGEKGA) show a composition bias toward basic and acidic residues. Residues 826-841 (PPGSRGNPGSRGENGP) show a composition bias toward low complexity. The span at 894–903 (GLKGGRGTQG) shows a compositional bias: gly residues. Pro-919 carries the post-translational modification 3-hydroxyproline; partial. Pro residues predominate over residues 919 to 929 (PPGPAGAPGPA). 6 consecutive short sequence motifs (cell attachment site) follow at residues 944-946 (RGD), 1067-1069 (RGD), 1070-1072 (RGD), 1100-1102 (RGD), 1127-1129 (RGD), and 1136-1138 (RGD). Basic and acidic residues predominate over residues 1063–1072 (AVGERGDRGD). A compositionally biased stretch (low complexity) spans 1093-1114 (APGDAGQRGDPGSRGPIGPPGR). Basic and acidic residues predominate over residues 1127–1141 (RGDKGDHGDRGDRGQ). Pro-1156 carries the post-translational modification 3-hydroxyproline; partial. Pro residues-rich tracts occupy residues 1171–1181 (PFGPRGPPGPV) and 1211–1226 (EGPP…PGPP). Residues 1230-1499 (TAALGDIMGH…GVEIGPVCFV (270 aa)) constitute a propeptide, C-terminal propeptide. Residue Asn-1262 is glycosylated (N-linked (GlcNAc...) asparagine). In terms of domain architecture, Fibrillar collagen NC1 spans 1266–1499 (PGVHATLKSL…GVEIGPVCFV (234 aa)). 3 cysteine pairs are disulfide-bonded: Cys-1296-Cys-1328, Cys-1336-Cys-1497, and Cys-1405-Cys-1450. Ca(2+)-binding residues include Asp-1314, Asn-1316, Gln-1317, and Asp-1322. An N-linked (GlcNAc...) asparagine glycan is attached at Asn-1400.

This sequence belongs to the fibrillar collagen family. In terms of assembly, trimers of two alpha 1(V) and one alpha 2(V) chains in most tissues and trimers of one alpha 1(V), one alpha 2(V), and one alpha 3(V) chains in placenta. In terms of processing, prolines at the third position of the tripeptide repeating unit (G-X-P) are hydroxylated in some or all of the chains. Probably 3-hydroxylated on Pro-919 and Pro-1156 by LEPREL1.

It is found in the secreted. It localises to the extracellular space. The protein localises to the extracellular matrix. Type V collagen is a member of group I collagen (fibrillar forming collagen). It is a minor connective tissue component of nearly ubiquitous distribution. Type V collagen binds to DNA, heparan sulfate, thrombospondin, heparin, and insulin. Type V collagen is a key determinant in the assembly of tissue-specific matrices. In Homo sapiens (Human), this protein is Collagen alpha-2(V) chain (COL5A2).